Reading from the N-terminus, the 246-residue chain is Small ribosomal subunit protein uS2 (246 aa).

This sequence belongs to the universal ribosomal protein uS2 family.

This chain is Small ribosomal subunit protein uS2, found in Pseudomonas aeruginosa (strain LESB58).